Consider the following 442-residue polypeptide: D-serine dehydratase (442 aa).

Lys-118 bears the N6-(pyridoxal phosphate)lysine mark.

It belongs to the serine/threonine dehydratase family. DsdA subfamily. In terms of assembly, monomer. Requires pyridoxal 5'-phosphate as cofactor.

It catalyses the reaction D-serine = pyruvate + NH4(+). The polypeptide is D-serine dehydratase (Escherichia coli O157:H7).